The sequence spans 296 residues: tRNA dimethylallyltransferase (296 aa).

2–9 (GPTASGKT) provides a ligand contact to ATP. A substrate-binding site is contributed by 4 to 9 (TASGKT). Interaction with substrate tRNA stretches follow at residues 27–30 (DSAL), 151–155 (QRLSR), and 232–237 (RCVGYR).

This sequence belongs to the IPP transferase family. Monomer. The cofactor is Mg(2+).

The enzyme catalyses adenosine(37) in tRNA + dimethylallyl diphosphate = N(6)-dimethylallyladenosine(37) in tRNA + diphosphate. Catalyzes the transfer of a dimethylallyl group onto the adenine at position 37 in tRNAs that read codons beginning with uridine, leading to the formation of N6-(dimethylallyl)adenosine (i(6)A). The polypeptide is tRNA dimethylallyltransferase (Shewanella sp. (strain MR-7)).